A 73-amino-acid polypeptide reads, in one-letter code: uncharacterized protein (73 aa).

Residues M1 to S21 form the signal peptide. Residues M1–G38 are compositionally biased toward low complexity. A disordered region spans residues M1–H43. A glycan (N-linked (GlcNAc...) asparagine) is linked at N34.

The protein localises to the secreted. This is an uncharacterized protein from Dictyostelium discoideum (Social amoeba).